We begin with the raw amino-acid sequence, 504 residues long: Dimethylsulfoniopropionate lyase 5 (504 aa).

It belongs to the aspartate/glutamate racemases family. ALMA1 subfamily. In terms of assembly, homotetramer.

The enzyme catalyses S,S-dimethyl-beta-propiothetin = acrylate + dimethyl sulfide + H(+). Functionally, mediates cleavage of dimethylsulfoniopropionate (DMSP) into dimethyl sulfide (DMS) and acrylate. DMS is the principal form by which sulfur is transported from oceans to the atmosphere and is a key component of the ocean sulfur cycle. This Emiliania huxleyi (strain CCMP1516) protein is Dimethylsulfoniopropionate lyase 5.